The sequence spans 198 residues: uncharacterized protein (198 aa).

This is an uncharacterized protein from Caenorhabditis elegans.